A 962-amino-acid polypeptide reads, in one-letter code: Protease 3 (962 aa).

An N-terminal signal peptide occupies residues 1–23 (MPRSTWFKALLLLVALWAPLSQA). His88 lines the Zn(2+) pocket. Glu91 (proton acceptor) is an active-site residue. Positions 92 and 169 each coordinate Zn(2+).

This sequence belongs to the peptidase M16 family. As to quaternary structure, monomer. Zn(2+) serves as cofactor.

It localises to the periplasm. It catalyses the reaction Preferential cleavage of 16-Tyr-|-Leu-17 and 25-Phe-|-Tyr-26 bonds of oxidized insulin B chain. Also acts on other substrates of Mw less than 7 kDa such as insulin and glucagon.. Endopeptidase that degrades small peptides of less than 7 kDa, such as glucagon and insulin. The chain is Protease 3 (ptrA) from Escherichia coli O157:H7.